A 453-amino-acid polypeptide reads, in one-letter code: DNA repair protein RadA (453 aa).

A C4-type zinc finger spans residues 10–27 (CQECGYQSPKYLGRCPNC). Residue 95-102 (GDPGIGKS) participates in ATP binding. The RadA KNRFG motif signature appears at 251–255 (KNRFG). Residues 350-453 (DAYLKSAGGV…VGQVLKAVFS (104 aa)) are lon-protease-like.

The protein belongs to the RecA family. RadA subfamily.

DNA-dependent ATPase involved in processing of recombination intermediates, plays a role in repairing DNA breaks. Stimulates the branch migration of RecA-mediated strand transfer reactions, allowing the 3' invading strand to extend heteroduplex DNA faster. Binds ssDNA in the presence of ADP but not other nucleotides, has ATPase activity that is stimulated by ssDNA and various branched DNA structures, but inhibited by SSB. Does not have RecA's homology-searching function. The sequence is that of DNA repair protein RadA from Streptococcus pyogenes serotype M6 (strain ATCC BAA-946 / MGAS10394).